Reading from the N-terminus, the 932-residue chain is LPS-assembly protein LptD (932 aa).

The N-terminal stretch at M1 to A33 is a signal peptide. The tract at residues P54–L87 is disordered.

This sequence belongs to the LptD family. In terms of assembly, component of the lipopolysaccharide transport and assembly complex. Interacts with LptE and LptA.

It localises to the cell outer membrane. Its function is as follows. Together with LptE, is involved in the assembly of lipopolysaccharide (LPS) at the surface of the outer membrane. The sequence is that of LPS-assembly protein LptD from Pseudomonas putida (strain GB-1).